The primary structure comprises 610 residues: Transducer of Cdc42-dependent actin assembly protein 2 homolog (610 aa).

The 267-residue stretch at 1 to 267 folds into the F-BAR domain; the sequence is MIPVSRFFTV…EVGKIDAEGD (267 aa). A disordered region spans residues 283–315; sequence APFEIEDLGDPKNCDSRTNDSADGSGGKLLKSS. Positions 291-302 are enriched in basic and acidic residues; that stretch reads GDPKNCDSRTND. One can recognise an REM-1 domain in the interval 352–429; that stretch reads SKPAHVRLSC…IHNLKEFYAM (78 aa). Residues 355 to 385 adopt a coiled-coil conformation; it reads AHVRLSCLRSKIRDMEKQLEQAIQGREGITR. 2 disordered regions span residues 436-487 and 499-519; these read EGQE…SSKN and LISS…RRAE. A compositionally biased stretch (basic and acidic residues) spans 437–449; sequence GQERSFGGRDTPD. Positions 453–464 are enriched in low complexity; sequence SMSGSSTNQSSS. Residues 475–487 are compositionally biased toward polar residues; it reads AGNSSSADDSSKN. The span at 501–513 shows a compositional bias: low complexity; sequence SSPKTSKSSTPTP. An SH3 domain is found at 547-610; it reads ETAVTVTALF…VPTSYLQFPQ (64 aa).

The protein belongs to the FNBP1 family. In terms of assembly, interacts (via SH3 domain) with wsp-1 and abi-1. Interacts with cdc-42 and (via SH3 domain) with wve-1.

Its subcellular location is the cell junction. It localises to the cell membrane. The protein localises to the cytoplasmic vesicle. The protein resides in the cytoplasm. It is found in the recycling endosome. Functionally, plays a role in protein trafficking, actin organization and embryonic morphogenesis. Potentially acts as a cdc-42 effector. May play a role in egg laying. Together with toca-1, is required for protein trafficking regulating yolk protein clathrin-mediated endocytosis by oocytes during oogenesis and retrograde recycling and the sorting of recycling endosome cargo proteins such as mig-14. Also, together with toca-2, controls the distribution of actin at cell junctions. This Caenorhabditis elegans protein is Transducer of Cdc42-dependent actin assembly protein 2 homolog.